The chain runs to 496 residues: Cobyric acid synthase (496 aa).

Positions 257–447 (KINVAIILLK…MHGILDNPAV (191 aa)) constitute a GATase cobBQ-type domain. Residue Cys-338 is the Nucleophile of the active site. His-439 is an active-site residue.

The protein belongs to the CobB/CobQ family. CobQ subfamily.

Its pathway is cofactor biosynthesis; adenosylcobalamin biosynthesis. In terms of biological role, catalyzes amidations at positions B, D, E, and G on adenosylcobyrinic A,C-diamide. NH(2) groups are provided by glutamine, and one molecule of ATP is hydrogenolyzed for each amidation. The polypeptide is Cobyric acid synthase (Parabacteroides distasonis (strain ATCC 8503 / DSM 20701 / CIP 104284 / JCM 5825 / NCTC 11152)).